We begin with the raw amino-acid sequence, 628 residues long: Kinesin-like protein KIN-10B (628 aa).

Residues 20 to 340 (NVRVVLRVRP…VSLAARSRHI (321 aa)) form the Kinesin motor domain. 114–121 (GATGSGKT) contacts ATP. A disordered region spans residues 496–519 (SPIDSNAKPNSAHGSSPFLKPMTP). Residues 498 to 509 (IDSNAKPNSAHG) are compositionally biased toward polar residues.

It belongs to the TRAFAC class myosin-kinesin ATPase superfamily. Kinesin family. KIN-10 subfamily.

This Arabidopsis thaliana (Mouse-ear cress) protein is Kinesin-like protein KIN-10B.